The primary structure comprises 413 residues: Imidazolonepropionase (413 aa).

2 residues coordinate Fe(3+): His-70 and His-72. Positions 70 and 72 each coordinate Zn(2+). Residues Arg-79, Tyr-142, and His-175 each coordinate 4-imidazolone-5-propanoate. Tyr-142 is a binding site for N-formimidoyl-L-glutamate. His-240 is a binding site for Fe(3+). His-240 contributes to the Zn(2+) binding site. Glu-243 contributes to the 4-imidazolone-5-propanoate binding site. Asp-315 contacts Fe(3+). Residue Asp-315 participates in Zn(2+) binding. The N-formimidoyl-L-glutamate site is built by Asn-317 and Gly-319. 4-imidazolone-5-propanoate is bound at residue Ser-320.

This sequence belongs to the metallo-dependent hydrolases superfamily. HutI family. The cofactor is Zn(2+). Fe(3+) is required as a cofactor.

The protein resides in the cytoplasm. The enzyme catalyses 4-imidazolone-5-propanoate + H2O = N-formimidoyl-L-glutamate. It participates in amino-acid degradation; L-histidine degradation into L-glutamate; N-formimidoyl-L-glutamate from L-histidine: step 3/3. Catalyzes the hydrolytic cleavage of the carbon-nitrogen bond in imidazolone-5-propanoate to yield N-formimidoyl-L-glutamate. It is the third step in the universal histidine degradation pathway. This chain is Imidazolonepropionase, found in Treponema denticola (strain ATCC 35405 / DSM 14222 / CIP 103919 / JCM 8153 / KCTC 15104).